A 213-amino-acid chain; its full sequence is Motile sperm domain-containing protein 1 (213 aa).

Residues 16–143 (PVFVFPTELI…KEHLTESLFF (128 aa)) enclose the MSP domain. The next 2 helical transmembrane spans lie at 159–179 (SLLT…PTLG) and 191–211 (LSVN…MAIF). The Nuclear export signal motif lies at 205 to 208 (LITM).

The protein localises to the endoplasmic reticulum membrane. It is found in the golgi apparatus membrane. Plays a role in differentiation and/or proliferation of mesenchymal stem cells. Proposed to be involved in epithelial-to-mesenchymal transition (EMT). However, another study suggests that it is not required for EMT or stem cell self-renewal and acts during later stages of differentiation. This Bos taurus (Bovine) protein is Motile sperm domain-containing protein 1 (MOSPD1).